A 110-amino-acid polypeptide reads, in one-letter code: Large ribosomal subunit protein uL22 (110 aa).

Belongs to the universal ribosomal protein uL22 family. As to quaternary structure, part of the 50S ribosomal subunit.

In terms of biological role, this protein binds specifically to 23S rRNA; its binding is stimulated by other ribosomal proteins, e.g. L4, L17, and L20. It is important during the early stages of 50S assembly. It makes multiple contacts with different domains of the 23S rRNA in the assembled 50S subunit and ribosome. The globular domain of the protein is located near the polypeptide exit tunnel on the outside of the subunit, while an extended beta-hairpin is found that lines the wall of the exit tunnel in the center of the 70S ribosome. This chain is Large ribosomal subunit protein uL22, found in Teredinibacter turnerae (strain ATCC 39867 / T7901).